A 155-amino-acid polypeptide reads, in one-letter code: MGKEFSGVLNGQGLKVALVVSRFNEFITSKLLSGAKDSLERHGVSADNTDVAWVPGAFEIPLVAQKLAKSGRYDAVICLGAVIRGSTPHFEYVSSEVSKGIARVGLDASLPVIFGVITADSIEQAIERAGTKMGNKGFDAATQAIEVANLMKNLG.

5-amino-6-(D-ribitylamino)uracil is bound by residues Phe23, 57–59 (AFE), and 81–83 (AVI). 86-87 (ST) is a binding site for (2S)-2-hydroxy-3-oxobutyl phosphate. The active-site Proton donor is the His89. Phe114 is a binding site for 5-amino-6-(D-ribitylamino)uracil. Arg128 is a (2S)-2-hydroxy-3-oxobutyl phosphate binding site.

It belongs to the DMRL synthase family.

It carries out the reaction (2S)-2-hydroxy-3-oxobutyl phosphate + 5-amino-6-(D-ribitylamino)uracil = 6,7-dimethyl-8-(1-D-ribityl)lumazine + phosphate + 2 H2O + H(+). The protein operates within cofactor biosynthesis; riboflavin biosynthesis; riboflavin from 2-hydroxy-3-oxobutyl phosphate and 5-amino-6-(D-ribitylamino)uracil: step 1/2. In terms of biological role, catalyzes the formation of 6,7-dimethyl-8-ribityllumazine by condensation of 5-amino-6-(D-ribitylamino)uracil with 3,4-dihydroxy-2-butanone 4-phosphate. This is the penultimate step in the biosynthesis of riboflavin. This Dehalococcoides mccartyi (strain ATCC BAA-2266 / KCTC 15142 / 195) (Dehalococcoides ethenogenes (strain 195)) protein is 6,7-dimethyl-8-ribityllumazine synthase.